We begin with the raw amino-acid sequence, 308 residues long: Transmembrane and ubiquitin-like domain-containing protein 1 (308 aa).

A helical transmembrane segment spans residues 11–31 (VTVLFALVLFFMVLMLAWVST). The segment at 39 to 162 (THWIRPEPAQ…GLGDGTTAQS (124 aa)) is disordered. Over residues 63–93 (PSQTLTNADPNSETVDSSDSTQSSREFQNAG) the composition is skewed to polar residues. The segment covering 103-115 (SSSGSTVSTGGSV) has biased composition (low complexity). Positions 132 to 149 (PNFTVSSRDPQAGASSSL) are enriched in polar residues. The Ubiquitin-like domain maps to 169 to 242 (IHLRLKFLND…LHCHISQHAS (74 aa)). A run of 2 helical transmembrane segments spans residues 253-273 (VPLNVGNLLVPLLFLIVMLLW) and 283-303 (FTGTATACLGGFTLLISAIAF).

The protein localises to the membrane. The protein resides in the cytoplasm. It localises to the nucleus. Its function is as follows. May contribute to the regulation of translation during cell-cycle progression. May contribute to the regulation of cell proliferation. The membrane form is involved in sterol-regulated ubiquitination and degradation of HMG-CoA reductase HMGCR. May be involved in centrosome assembly. In Xenopus laevis (African clawed frog), this protein is Transmembrane and ubiquitin-like domain-containing protein 1 (tmub1).